The primary structure comprises 211 residues: Ribosomal RNA small subunit methyltransferase G (211 aa).

S-adenosyl-L-methionine-binding positions include Gly73, 125 to 126 (IE), and Arg141.

The protein belongs to the methyltransferase superfamily. RNA methyltransferase RsmG family.

The protein localises to the cytoplasm. The catalysed reaction is guanosine(527) in 16S rRNA + S-adenosyl-L-methionine = N(7)-methylguanosine(527) in 16S rRNA + S-adenosyl-L-homocysteine. Functionally, specifically methylates the N7 position of guanine in position 527 of 16S rRNA. The chain is Ribosomal RNA small subunit methyltransferase G from Methylobacterium radiotolerans (strain ATCC 27329 / DSM 1819 / JCM 2831 / NBRC 15690 / NCIMB 10815 / 0-1).